A 118-amino-acid polypeptide reads, in one-letter code: UPF0295 protein GWCH70_0499 (118 aa).

2 consecutive transmembrane segments (helical) span residues 12-32 and 42-62; these read IRTF…IGIF and LFMI…FWIG.

Belongs to the UPF0295 family.

The protein resides in the cell membrane. The protein is UPF0295 protein GWCH70_0499 of Geobacillus sp. (strain WCH70).